Reading from the N-terminus, the 826-residue chain is Ribonucleoside-diphosphate reductase large subunit (826 aa).

Substrate contacts are provided by residues threonine 171, 186 to 187, glycine 217, 387 to 391, and 594 to 598; these read SC, NLCAE, and PTSGC. Cysteine 187 and cysteine 403 are oxidised to a cystine. Asparagine 387 acts as the Proton acceptor in catalysis. The Cysteine radical intermediate role is filled by cysteine 389. Glutamate 391 acts as the Proton acceptor in catalysis.

It belongs to the ribonucleoside diphosphate reductase large chain family. Heterotetramer composed of a homodimer of the large subunit (R1) and a homodimer of the small subunit (R2). Larger multisubunit protein complex are also active, composed of (R1)n(R2)n.

The catalysed reaction is a 2'-deoxyribonucleoside 5'-diphosphate + [thioredoxin]-disulfide + H2O = a ribonucleoside 5'-diphosphate + [thioredoxin]-dithiol. Ribonucleoside-diphosphate reductase holoenzyme provides the precursors necessary for viral DNA synthesis. Allows virus growth in non-dividing cells, as well as reactivation from latency in infected hosts. Catalyzes the biosynthesis of deoxyribonucleotides from the corresponding ribonucleotides. This chain is Ribonucleoside-diphosphate reductase large subunit, found in Epstein-Barr virus (strain GD1) (HHV-4).